A 406-amino-acid polypeptide reads, in one-letter code: 2-epi-valiolone synthase (406 aa).

Residues 1-21 form a disordered region; sequence MPSTGSTPILAHDVKSPHRGS. NAD(+) contacts are provided by residues 105 to 108, 137 to 141, 161 to 162, Lys174, Lys183, and 201 to 204; these read EPSK, GVLCD, TS, and CLAT. Residues Glu216, His287, and His304 each coordinate Zn(2+).

The protein belongs to the sugar phosphate cyclases superfamily. EVS family. NAD(+) serves as cofactor. Co(2+) is required as a cofactor. Requires Zn(2+) as cofactor.

It catalyses the reaction D-sedoheptulose 7-phosphate = 2-epi-valiolone + phosphate. In terms of biological role, catalyzes the conversion of sedoheptulose 7-phosphate to 2-epi-valiolone, which may serve as an alternative precursor for aminocyclitol biosynthesis. In Stigmatella aurantiaca (strain DW4/3-1), this protein is 2-epi-valiolone synthase.